The primary structure comprises 123 residues: Small ribosomal subunit protein uS17 (123 aa).

Belongs to the universal ribosomal protein uS17 family. In terms of assembly, part of the 30S ribosomal subunit.

Its function is as follows. One of the primary rRNA binding proteins, it binds specifically to the 5'-end of 16S ribosomal RNA. This chain is Small ribosomal subunit protein uS17, found in Pyrobaculum aerophilum (strain ATCC 51768 / DSM 7523 / JCM 9630 / CIP 104966 / NBRC 100827 / IM2).